The primary structure comprises 470 residues: Argininosuccinate lyase (470 aa).

Belongs to the lyase 1 family. Argininosuccinate lyase subfamily.

The protein resides in the cytoplasm. It catalyses the reaction 2-(N(omega)-L-arginino)succinate = fumarate + L-arginine. The protein operates within amino-acid biosynthesis; L-arginine biosynthesis; L-arginine from L-ornithine and carbamoyl phosphate: step 3/3. This is Argininosuccinate lyase from Synechococcus sp. (strain WH7803).